Here is a 102-residue protein sequence, read N- to C-terminus: Small ribosomal subunit protein uS10 (102 aa).

The protein belongs to the universal ribosomal protein uS10 family. As to quaternary structure, part of the 30S ribosomal subunit.

In terms of biological role, involved in the binding of tRNA to the ribosomes. This Cereibacter sphaeroides (strain ATCC 17029 / ATH 2.4.9) (Rhodobacter sphaeroides) protein is Small ribosomal subunit protein uS10.